The chain runs to 367 residues: Molybdenum import ATP-binding protein ModC (367 aa).

In terms of domain architecture, ABC transporter spans 1–234; that stretch reads MSSAALEVRL…PALSGGFGHE (234 aa). 33-40 serves as a coordination point for ATP; the sequence is GPSGAGKS. One can recognise a Mop domain in the interval 293–366; sequence HISLHNILPV…IKSVAVDVLG (74 aa).

The protein belongs to the ABC transporter superfamily. Molybdate importer (TC 3.A.1.8) family. The complex is composed of two ATP-binding proteins (ModC), two transmembrane proteins (ModB) and a solute-binding protein (ModA).

The protein resides in the cell inner membrane. It catalyses the reaction molybdate(out) + ATP + H2O = molybdate(in) + ADP + phosphate + H(+). Its function is as follows. Part of the ABC transporter complex ModABC involved in molybdenum import. Responsible for energy coupling to the transport system. The polypeptide is Molybdenum import ATP-binding protein ModC (Granulibacter bethesdensis (strain ATCC BAA-1260 / CGDNIH1)).